Here is an 89-residue protein sequence, read N- to C-terminus: Late cornified envelope protein 3A (89 aa).

2 stretches are compositionally biased toward low complexity: residues 1 to 10 (MSCQQNQQQC) and 17 to 46 (PAKS…SERS). Disordered stretches follow at residues 1–46 (MSCQ…SERS) and 62–89 (CQSS…AGCC).

It belongs to the LCE family. In terms of assembly, interacts with CYSRT1; the interaction is direct. Skin-specific. Expression was readily detected in adult trunk skin, adult arm skin, fetal skin, penal skin, vulva, esophagus and tongue. Not expressed in the cervix, rectum, lung, colon, or placenta.

Its function is as follows. A structural component of the cornified envelope of the stratum corneum involved in innate cutaneous host defense. Possesses defensin-like antimicrobial activity against a broad spectrum of Gram-positive and Gram-negative bacteria, both aerobic and anaerobic species. Upon inflammation, may regulate skin barrier repair by shaping cutaneous microbiota composition and immune response to bacterial antigens. This chain is Late cornified envelope protein 3A, found in Homo sapiens (Human).